Reading from the N-terminus, the 243-residue chain is Probable transcriptional regulatory protein LSEI_1022 (243 aa).

Residues 1 to 23 (MSGHSKWHNIQGRKNAQDSKRGK) are disordered.

The protein belongs to the TACO1 family.

The protein resides in the cytoplasm. This Lacticaseibacillus paracasei (strain ATCC 334 / BCRC 17002 / CCUG 31169 / CIP 107868 / KCTC 3260 / NRRL B-441) (Lactobacillus paracasei) protein is Probable transcriptional regulatory protein LSEI_1022.